The sequence spans 1070 residues: MHQPPESTAAATAAADISARKMAHPAMFPRRGSGSGSASALNAAGTGVGSNATSSEDFPPPSLLQPPPPAASSTSGPQPPPPQSLNLLSQAQLQAQPLAPGGTQMKKKSGFQITSVTPAQISASISSNNSIAEDTESYDDLDESHTEDLSSSEILDVSLSRATDLGEPERSSSEETLNNFQEAETPGAVSPNQPHLPQPHLPHLPQQNVVINGNAHPHHLHHHHHIHHGHHLQHGHHHPSHVAVASASIPGGPPPSPVTRKLSTTGSSDSITPVAPTSAVSSSGSPASVMTNMRAPSTTGGIGINSVTGTSTVNNVNITAVGSFNPNVTSSMLGNVNISTSNIPSAASVSVGPGVTSGVNVNILSGMGNGTISSSAAVNSVPNAAAGMTGGSISSQQQQPTVNTSRFRVVKLDSSSEPFKKGRWTCTEFYEKENAVPATEGVLINKVVETVKQNPIEVTSERESTSGSSVSSSVSTRSHYTESVGSGEMGAPTVVVQQQQQQQQQQPALQGVTLQQMDFGSTGPQSIPAVSIPQSISQSQISQVQLQSQELSYQQKQGLQPVPLQATMSAATGIQPSPVNVVGVTSALGQQPSISSLAQPQLPYSQAAPPVQTPLPGAPPPQQLQYGQQQPMVSTQMAPGHVKSVTQNPASEYVQQQPILQTAMSSGQPSSAGVGAGTTVIPVAQPQGIQLPVQPTAVPAQPTGASVQPVGQAQAAVSAVPTGSQIANIGQQANIPTAVQQPSTQVPPSVIQQGAPPSSQVVPPAQTGIIHQGVQTSAPSLPQQLVIASQSSLLTVPPQPQGVEPVAQGIVSQQLPAVSPLPSASSISVTSQVSSAGPSGMPSAPTNLVPPQNIAQTPATQNGNLVQSVSQPPLIATNINLPLAQQIPLSSTQFSAQSLAQAIGSQIEDARHAAEPSLVGLPQTISGDSGGMSAVSDGSSSSLAASASLFPLKVLPLTTPLVDGEDESSSGASVVAIDNKIEQAMDLVKSHLMYAVREEVEVLKEQIKELIEKNSQLEQENNLLKTLASPEQLAQFQAQLQTGSPPATTQPQGTTQPPAQPASQGSGPTA.

The tract at residues 1-98 is required for interaction with TGFBR1 and promotion of TGF-beta signaling; it reads MHQPPESTAA…SQAQLQAQPL (98 aa). Disordered regions lie at residues 1–110, 125–289, 458–487, 604–637, and 830–858; these read MHQP…KKSG, ISSN…PASV, VTSERESTSGSSVSSSVSTRSHYTESVGSG, YSQAAPPVQTPLPGAPPPQQLQYGQQQPMVSTQM, and TSQVSSAGPSGMPSAPTNLVPPQNIAQTP. Positions 36 to 45 are enriched in low complexity; it reads GSASALNAAG. Residues 58-70 are compositionally biased toward pro residues; it reads FPPPSLLQPPPPA. Over residues 84–100 the composition is skewed to low complexity; the sequence is SLNLLSQAQLQAQPLAP. The segment covering 133–142 has biased composition (acidic residues); it reads EDTESYDDLD. A compositionally biased stretch (basic residues) spans 216–240; the sequence is HPHHLHHHHHIHHGHHLQHGHHHPS. Low complexity predominate over residues 241-250; it reads HVAVASASIP. Polar residues predominate over residues 261–271; that stretch reads KLSTTGSSDSI. At Ser-263 the chain carries Phosphoserine. Low complexity-rich tracts occupy residues 272–289 and 465–478; these read TPVAPTSAVSSSGSPASV and TSGSSVSSSVSTRS. Residues 611-622 show a composition bias toward pro residues; sequence VQTPLPGAPPPQ. Over residues 830–845 the composition is skewed to low complexity; the sequence is TSQVSSAGPSGMPSAP. Residues 849–858 show a composition bias toward polar residues; it reads VPPQNIAQTP. Residues 1003-1024 form a leucine-zipper region; the sequence is LKEQIKELIEKNSQLEQENNLL. Residues 1034–1070 are disordered; sequence AQFQAQLQTGSPPATTQPQGTTQPPAQPASQGSGPTA. The span at 1041–1070 shows a compositional bias: low complexity; it reads QTGSPPATTQPQGTTQPPAQPASQGSGPTA.

Belongs to the TSC-22/Dip/Bun family. Forms homodimers. Forms heterodimers. Component of a complex composed of TSC22D1 (via N-terminus), TGFBR1 and TGFBR2; the interaction between TSC22D1 and TGFBR1 is inhibited by SMAD7 and promoted by TGFB1. Interacts with SMAD7; the interaction requires TGF-beta and the interaction is inhibited by TGFBR1. Interacts with TPT1/fortilin; interaction results in the destabilization of TSC22D1 protein and prevents TSC22D1-mediated apoptosis. Interacts with SMAD4 (via N-terminus). Interacts with ACVRL1/ALK1, ACVR1/ALK2, BMPR1A/ALK3, ACVR1B/ALK4, BMPR1B/ALK6, ACVR2A/ACTRII, and BMPR2. Interacts with SMAD6. Interacts with TFE3; the interaction is enhanced in the presence of TGF-beta. As to quaternary structure, forms a heterodimer with TSC22D4/THG1. In terms of assembly, forms a heterodimer with TSC22D4/THG1. Interacts with histone H1-2. Interacts with GNL3.

The protein localises to the cytoplasm. Its subcellular location is the nucleus. It localises to the cell membrane. It is found in the mitochondrion. Its function is as follows. Transcriptional repressor. Acts on the C-type natriuretic peptide (CNP) promoter. Acts to promote CASP3-mediated apoptosis. Positively regulates TGF-beta signaling by interacting with SMAD7 which inhibits binding of SMAD7 to TGFBR1, preventing recruitment of SMURF ubiquitin ligases to TGFBR1 and inhibiting SMURF-mediated ubiquitination and degradation of TGFBR1. Contributes to enhancement of TGF-beta signaling by binding to and modulating the transcription activator activity of SMAD4. Promotes TGF-beta-induced transcription of COL1A2; via its interaction with TFE3 at E-boxes in the gene proximal promoter. Plays a role in the repression of hematopoietic precursor cell growth. Promotes IL2 deprivation-induced apoptosis in T-lymphocytes, via repression of TSC22D3/GILZ transcription and activation of the caspase cascade. In terms of biological role, may act to negatively regulate TGFB3 signaling and thereby inhibit cell death in mammary gland cells. Positively regulates cell death in response to TGFB3 during mammary gland involution. The chain is TSC22 domain family protein 1 from Pongo abelii (Sumatran orangutan).